We begin with the raw amino-acid sequence, 369 residues long: Large ribosomal subunit protein uL4 (369 aa).

An N-acetylthreonine modification is found at Thr-2.

This sequence belongs to the universal ribosomal protein uL4 family.

The sequence is that of Large ribosomal subunit protein uL4 (rpl4) from Dictyostelium discoideum (Social amoeba).